Here is a 257-residue protein sequence, read N- to C-terminus: Short chain dehydrogenase prhI (257 aa).

A helical membrane pass occupies residues 7–29; it reads HVVIITGSSSGIGLAASTLALAS. Position 11 (isoleucine 11) interacts with NADP(+). Asparagine 50 is a glycosylation site (N-linked (GlcNAc...) asparagine). Aspartate 57 contributes to the NADP(+) binding site. Asparagine 92 and asparagine 110 each carry an N-linked (GlcNAc...) asparagine glycan. Residues arginine 119, tyrosine 151, lysine 155, and valine 184 each contribute to the NADP(+) site. The Proton acceptor role is filled by tyrosine 151. Lysine 155 functions as the Lowers pKa of active site Tyr in the catalytic mechanism.

The protein belongs to the short-chain dehydrogenases/reductases (SDR) family.

It is found in the membrane. It carries out the reaction protoaustinoid A + A = protoaustinoid B + AH2. Its pathway is secondary metabolite biosynthesis; terpenoid biosynthesis. Short chain dehydrogenase; part of the gene cluster that mediates the biosynthesis of paraherquonin, a meroterpenoid with a unique, highly congested hexacyclic molecular architecture. The first step of the pathway is the synthesis of 3,5-dimethylorsellinic acid (DMOA) by the polyketide synthase prhL. Synthesis of DMOA is followed by farnesylation by the prenyltransferase prhE, methylesterification by the methyl-transferase prhM, epoxidation of the prenyl chain by the flavin-dependent monooxygenase prhF, and cyclization of the farnesyl moiety by the terpene cyclase prhH, to yield the tetracyclic intermediate, protoaustinoid A. The short chain dehydrogenase prhI then oxidizes the C-3 alcohol group of the terpene cyclase product to transform protoaustinoid A into protoaustinoid B. The FAD-binding monooxygenase prhJ catalyzes the oxidation of protoaustinoid B into preaustinoid A which is further oxidized into preaustinoid A1 by FAD-binding monooxygenase phrK. Finally, prhA leads to berkeleydione via the berkeleyone B intermediate. PrhA is a multifunctional dioxygenase that first desaturates at C5-C6 to form berkeleyone B, followed by rearrangement of the A/B-ring to form the cycloheptadiene moiety in berkeleydione. Berkeleydione serves as the key intermediate for the biosynthesis of paraherquonin as well as many other meroterpenoids. The cytochrome P450 monooxygenases prhB, prhD, and prhN, as well as the isomerase prhC, are probably involved in the late stage of paraherquonin biosynthesis, after the production of berkeleydione. Especially prhC might be a multifunctional enzyme that catalyzes the D-ring expansion via intramolecular methoxy rearrangement, as well as the hydrolysis of the expanded D-ring. The chain is Short chain dehydrogenase prhI from Penicillium brasilianum.